Consider the following 165-residue polypeptide: Glucosamine 6-phosphate N-acetyltransferase 1 (165 aa).

The region spanning 22–165 is the N-acetyltransferase domain; sequence YRIRPLELAD…EKNVQMGLYF (144 aa). Substrate-binding positions include S44, 92 to 95, and 104 to 106; these read KFIR and EDV. Residue 114-119 participates in acetyl-CoA binding; sequence GRGLGE. Residue 135–136 coordinates substrate; sequence YK. 149–151 provides a ligand contact to acetyl-CoA; the sequence is YAK.

This sequence belongs to the acetyltransferase family. GNA1 subfamily. As to quaternary structure, homodimer. In terms of tissue distribution, highly expressed in the root elongation zone and at lower levels in leaves and grains.

It localises to the endoplasmic reticulum membrane. The catalysed reaction is D-glucosamine 6-phosphate + acetyl-CoA = N-acetyl-D-glucosamine 6-phosphate + CoA + H(+). Its pathway is nucleotide-sugar biosynthesis; UDP-N-acetyl-alpha-D-glucosamine biosynthesis; N-acetyl-alpha-D-glucosamine 1-phosphate from alpha-D-glucosamine 6-phosphate (route I): step 1/2. Acetyltransferase involved in de novo biosynthesis of UDP-N-acetylglucosamine (UDP-GlcNAc) in roots and is required for maintaining normal root cell shape. UDP-GlcNAc is an essential metabolite that serves as an initial sugar donor for N-glycan synthesis and thus plays an important role in protein and lipid glycosylation. The chain is Glucosamine 6-phosphate N-acetyltransferase 1 (GNA1) from Oryza sativa subsp. japonica (Rice).